A 157-amino-acid polypeptide reads, in one-letter code: Ribosomal RNA large subunit methyltransferase H (157 aa).

S-adenosyl-L-methionine contacts are provided by residues leucine 73, glycine 105, and 124–129; that span reads LSLMTF.

It belongs to the RNA methyltransferase RlmH family. As to quaternary structure, homodimer.

It localises to the cytoplasm. The enzyme catalyses pseudouridine(1915) in 23S rRNA + S-adenosyl-L-methionine = N(3)-methylpseudouridine(1915) in 23S rRNA + S-adenosyl-L-homocysteine + H(+). Its function is as follows. Specifically methylates the pseudouridine at position 1915 (m3Psi1915) in 23S rRNA. The protein is Ribosomal RNA large subunit methyltransferase H of Flavobacterium johnsoniae (strain ATCC 17061 / DSM 2064 / JCM 8514 / BCRC 14874 / CCUG 350202 / NBRC 14942 / NCIMB 11054 / UW101) (Cytophaga johnsonae).